Reading from the N-terminus, the 228-residue chain is Potassium/proton antiporter CemA (228 aa).

The next 3 membrane-spanning stretches (helical) occupy residues 6–26, 113–133, and 188–208; these read FIPLLYLTSIVFLPWWVSFSF, IICFVILSGYSFLVNEELFIL, and IISGLVSTFPVIFDTIFKYWI.

It belongs to the CemA family.

It is found in the plastid. The protein localises to the chloroplast inner membrane. The enzyme catalyses K(+)(in) + H(+)(out) = K(+)(out) + H(+)(in). In terms of biological role, contributes to K(+)/H(+) antiport activity by supporting proton efflux to control proton extrusion and homeostasis in chloroplasts in a light-dependent manner to modulate photosynthesis. Prevents excessive induction of non-photochemical quenching (NPQ) under continuous-light conditions. Indirectly promotes efficient inorganic carbon uptake into chloroplasts. The polypeptide is Potassium/proton antiporter CemA (Populus alba (White poplar)).